Reading from the N-terminus, the 117-residue chain is Large ribosomal subunit protein bL20 (117 aa).

It belongs to the bacterial ribosomal protein bL20 family.

Its function is as follows. Binds directly to 23S ribosomal RNA and is necessary for the in vitro assembly process of the 50S ribosomal subunit. It is not involved in the protein synthesizing functions of that subunit. The polypeptide is Large ribosomal subunit protein bL20 (Histophilus somni (strain 129Pt) (Haemophilus somnus)).